The sequence spans 227 residues: tRNA (guanine-N(7)-)-methyltransferase (227 aa).

4 residues coordinate S-adenosyl-L-methionine: Glu-58, Glu-83, Asp-110, and Asp-132. Asp-132 is a catalytic residue. Substrate is bound by residues Lys-136, Asp-168, and 205 to 208 (TRFE).

It belongs to the class I-like SAM-binding methyltransferase superfamily. TrmB family.

The enzyme catalyses guanosine(46) in tRNA + S-adenosyl-L-methionine = N(7)-methylguanosine(46) in tRNA + S-adenosyl-L-homocysteine. It participates in tRNA modification; N(7)-methylguanine-tRNA biosynthesis. Its function is as follows. Catalyzes the formation of N(7)-methylguanine at position 46 (m7G46) in tRNA. The polypeptide is tRNA (guanine-N(7)-)-methyltransferase (Acidithiobacillus ferrooxidans (strain ATCC 23270 / DSM 14882 / CIP 104768 / NCIMB 8455) (Ferrobacillus ferrooxidans (strain ATCC 23270))).